A 1098-amino-acid polypeptide reads, in one-letter code: Contactin-5 (1098 aa).

The signal sequence occupies residues 1–23 (MASCWRLILFLSVTRWLSDYSEA). Ig-like C2-type domains follow at residues 98–189 (PVFV…ATLQ), 195–281 (NFSG…RVLS), 299–384 (PKIE…GQLQ), 389–473 (PHWV…AELK), 479–568 (PSFE…LSVK), and 570–659 (PTRI…DSVS). Cys122 and Cys172 are oxidised to a cystine. N-linked (GlcNAc...) asparagine glycosylation is found at Asn137 and Asn195. 2 cysteine pairs are disulfide-bonded: Cys216/Cys268 and Cys321/Cys368. Asn396, Asn448, and Asn539 each carry an N-linked (GlcNAc...) asparagine glycan. Disulfide bonds link Cys410/Cys457, Cys502/Cys550, and Cys592/Cys649. 4 Fibronectin type-III domains span residues 672–770 (PPGV…TNEA), 775–872 (APSN…SAEG), 877–971 (APTD…TKRH), and 976–1066 (PPGN…SYSG). 3 N-linked (GlcNAc...) asparagine glycosylation sites follow: Asn778, Asn815, and Asn930. Positions 956 to 982 (GYGPPSREASTTTKRHPPREPPGNLRW) are disordered. Asn1001 carries an N-linked (GlcNAc...) asparagine glycan. Ser1071 is lipidated: GPI-anchor amidated serine. A propeptide spans 1072-1098 (AQSTLHSLSKWSSVTLLLALMLPSSSW) (removed in mature form).

Belongs to the immunoglobulin superfamily. Contactin family. Interacts with PTPRG. Expressed in the nervous system. Preferentially expressed in the central auditory pathways.

It localises to the cell membrane. Its function is as follows. Contactins mediate cell surface interactions during nervous system development. Has some neurite outgrowth-promoting activity in the cerebral cortical neurons but not in hippocampal neurons. Involved in neuronal activity in the auditory system. This chain is Contactin-5 (Cntn5), found in Mus musculus (Mouse).